The sequence spans 869 residues: Mismatch repair endonuclease PMS2 (869 aa).

ATP contacts are provided by N44, D69, E108, A109, and L110. A Nuclear localization signal motif is present at residues 585–588; the sequence is RRFK.

The protein belongs to the DNA mismatch repair MutL/HexB family.

It is found in the nucleus. The enzyme catalyses ATP + H2O = ADP + phosphate + H(+). Functionally, component of the post-replicative DNA mismatch repair system (MMR). Involved in B cell growth by positively regulating B cell proliferation and controlling replication efficiency. Controls cell cycle to prevent re-replication and defects in DNA damage-induced G2 checkpoint. Doesn't seem to counteract or control the immunoglobulin gene conversion (Ig GC) and to contribute to guanine/uracil mismatch repair. Possesses an ATPase activity, but in the absence of gross structural changes, ATP hydrolysis may not be necessary for proficient mismatch repair. The polypeptide is Mismatch repair endonuclease PMS2 (Gallus gallus (Chicken)).